The chain runs to 544 residues: uncharacterized protein (544 aa).

Helical transmembrane passes span 31–51 (ILVF…AALA), 52–72 (GSVL…IGLL), 84–104 (LPWM…QWLI), 116–136 (WGLF…YTTV), 162–182 (FAFS…IAAG), 191–211 (FGEL…WSAL), 230–250 (LAPL…AKSF), 257–277 (GFDY…GFGF), 318–338 (FLFV…TASI), 356–376 (TIAL…QALA), 383–403 (VIYF…WLVQ), 407–427 (VALL…AYLI), 450–470 (FFYA…LFLV), and 501–521 (FAVA…AIFY).

It belongs to the sodium:galactoside symporter (TC 2.A.2) family.

Its subcellular location is the cell membrane. This is an uncharacterized protein from Synechocystis sp. (strain ATCC 27184 / PCC 6803 / Kazusa).